Consider the following 252-residue polypeptide: Triosephosphate isomerase (252 aa).

Substrate is bound at residue Asn9–Lys11. His100 serves as the catalytic Electrophile. Glu171 serves as the catalytic Proton acceptor. Substrate is bound by residues Gly177, Ser216, and Gly237–Gly238.

This sequence belongs to the triosephosphate isomerase family. As to quaternary structure, homodimer.

It is found in the cytoplasm. It catalyses the reaction D-glyceraldehyde 3-phosphate = dihydroxyacetone phosphate. It participates in carbohydrate biosynthesis; gluconeogenesis. The protein operates within carbohydrate degradation; glycolysis; D-glyceraldehyde 3-phosphate from glycerone phosphate: step 1/1. Involved in the gluconeogenesis. Catalyzes stereospecifically the conversion of dihydroxyacetone phosphate (DHAP) to D-glyceraldehyde-3-phosphate (G3P). The polypeptide is Triosephosphate isomerase (Polynucleobacter asymbioticus (strain DSM 18221 / CIP 109841 / QLW-P1DMWA-1) (Polynucleobacter necessarius subsp. asymbioticus)).